The following is a 353-amino-acid chain: GTPase Obg (353 aa).

An Obg domain is found at 1–159 (MKFLDEAKVY…RWIWLRLKLI (159 aa)). An OBG-type G domain is found at 160 to 327 (ADAGLVGLPN…ALRALVAVIG (168 aa)). Residues 166–173 (GLPNAGKS), 191–195 (FTTLH), 212–215 (DIPG), 279–282 (NKID), and 308–310 (SGV) each bind GTP. S173 and T193 together coordinate Mg(2+).

This sequence belongs to the TRAFAC class OBG-HflX-like GTPase superfamily. OBG GTPase family. As to quaternary structure, monomer. Requires Mg(2+) as cofactor.

Its subcellular location is the cytoplasm. Its function is as follows. An essential GTPase which binds GTP, GDP and possibly (p)ppGpp with moderate affinity, with high nucleotide exchange rates and a fairly low GTP hydrolysis rate. Plays a role in control of the cell cycle, stress response, ribosome biogenesis and in those bacteria that undergo differentiation, in morphogenesis control. The protein is GTPase Obg of Rhodopseudomonas palustris (strain ATCC BAA-98 / CGA009).